A 255-amino-acid polypeptide reads, in one-letter code: Endonuclease 8 2 (255 aa).

Proline 2 serves as the catalytic Schiff-base intermediate with DNA. Catalysis depends on glutamate 3, which acts as the Proton donor. The active-site Proton donor; for beta-elimination activity is the lysine 51. Residues glutamine 67 and asparagine 164 each coordinate DNA. An FPG-type zinc finger spans residues 221-255 (WVYGRAGQGCRRCGTLIAYDTTDERVRYWCPACQR). Catalysis depends on arginine 245, which acts as the Proton donor; for delta-elimination activity.

The protein belongs to the FPG family. It depends on Zn(2+) as a cofactor.

The catalysed reaction is 2'-deoxyribonucleotide-(2'-deoxyribose 5'-phosphate)-2'-deoxyribonucleotide-DNA = a 3'-end 2'-deoxyribonucleotide-(2,3-dehydro-2,3-deoxyribose 5'-phosphate)-DNA + a 5'-end 5'-phospho-2'-deoxyribonucleoside-DNA + H(+). Functionally, involved in base excision repair of DNA damaged by oxidation or by mutagenic agents. Acts as a DNA glycosylase that recognizes and removes damaged bases. Has AP (apurinic/apyrimidinic) lyase activity and introduces nicks in the DNA strand. Cleaves the DNA backbone by beta-delta elimination to generate a single-strand break at the site of the removed base with both 3'- and 5'-phosphates. This is Endonuclease 8 2 (nei2) from Mycobacterium bovis (strain ATCC BAA-935 / AF2122/97).